A 655-amino-acid chain; its full sequence is SRSF protein kinase 1 (655 aa).

Residues 1–57 (MERKVLALQARKKRTKAKKDKAQRKPETQHRGSAPHSESDLPEQEEEILGSDDDEQE) are disordered. Positions 10 to 22 (ARKKRTKAKKDKA) are enriched in basic residues. Positions 40–57 (DLPEQEEEILGSDDDEQE) are enriched in acidic residues. Serine 51 bears the Phosphoserine; by CK2 mark. Residues 80 to 653 (YHVIRKLGWG…AAECLRHPWL (574 aa)) enclose the Protein kinase domain. Residues 86–94 (LGWGHFSTV) and lysine 109 each bind ATP. Aspartate 213 serves as the catalytic Proton acceptor. 2 disordered regions span residues 238–341 (WQRS…QDQT) and 397–417 (FLSSQNGDSSTSQETDSCTPI). The span at 265–276 (KNKKKKLKKKQK) shows a compositional bias: basic residues. 2 stretches are compositionally biased toward basic and acidic residues: residues 277 to 288 (RQAELLEKRMQE) and 304 to 318 (NKQEESESPVERPLK). Phosphoserine occurs at positions 309, 311, and 333. Serine 555 bears the Phosphoserine; by CK2 mark.

The protein belongs to the protein kinase superfamily. CMGC Ser/Thr protein kinase family. Monomer. Found in a multisubunit complex containing seven proteins, named toposome, which separates entangled circular chromatin DNA during chromosome segregation. Interacts with HHV-1 ICP27 protein. Interacts with DNAJC8 and AHSA1/AHA1 and this mediates formation of a complex with the Hsp70 /Hsp90 machinery. Binds to IGF2BP1, SYNCRIP, HNRNPA2B1 and HNRNPC. Interacts with SAFB/SAFB1 and SAFB2 which inhibits its activity. Requires Mg(2+) as cofactor.

The protein resides in the cytoplasm. It localises to the nucleus. It is found in the nucleoplasm. The protein localises to the nucleus matrix. Its subcellular location is the microsome. The protein resides in the nucleus speckle. It localises to the chromosome. The catalysed reaction is L-seryl-[protein] + ATP = O-phospho-L-seryl-[protein] + ADP + H(+). The enzyme catalyses L-threonyl-[protein] + ATP = O-phospho-L-threonyl-[protein] + ADP + H(+). With respect to regulation, activated by phosphorylation on Ser-51 and Ser-555. Its function is as follows. Serine/arginine-rich protein-specific kinase which specifically phosphorylates its substrates at serine residues located in regions rich in arginine/serine dipeptides, known as RS domains and is involved in the phosphorylation of SR splicing factors and the regulation of splicing. Plays a central role in the regulatory network for splicing, controlling the intranuclear distribution of splicing factors in interphase cells and the reorganization of nuclear speckles during mitosis. Can influence additional steps of mRNA maturation, as well as other cellular activities, such as chromatin reorganization in somatic and sperm cells and cell cycle progression. Phosphorylates SFRS2, ZRSR2, LBR and PRM1. Phosphorylates SRSF1 using a directional (C-terminal to N-terminal) and a dual-track mechanism incorporating both processive phosphorylation (in which the kinase stays attached to the substrate after each round of phosphorylation) and distributive phosphorylation steps (in which the kinase and substrate dissociate after each phosphorylation event). The RS domain of SRSF1 binds first to a docking groove in the large lobe of the kinase domain of SRPK1. This induces certain structural changes in SRPK1 and/or RRM2 domain of SRSF1, allowing RRM2 to bind the kinase and initiate phosphorylation. The cycles continue for several phosphorylation steps in a processive manner (steps 1-8) until the last few phosphorylation steps (approximately steps 9-12). During that time, a mechanical stress induces the unfolding of the beta-4 motif in RRM2, which then docks at the docking groove of SRPK1. This also signals RRM2 to begin to dissociate, which facilitates SRSF1 dissociation after phosphorylation is completed. Can mediate hepatitis B virus (HBV) core protein phosphorylation. It plays a negative role in the regulation of HBV replication through a mechanism not involving the phosphorylation of the core protein but by reducing the packaging efficiency of the pregenomic RNA (pgRNA) without affecting the formation of the viral core particles. Can induce splicing of exon 10 in MAPT/TAU. This is SRSF protein kinase 1 from Pongo abelii (Sumatran orangutan).